Here is a 310-residue protein sequence, read N- to C-terminus: Aspartate carbamoyltransferase catalytic subunit (310 aa).

Positions 58 and 59 each coordinate carbamoyl phosphate. K86 is a binding site for L-aspartate. Residues R108, H136, and Q139 each contribute to the carbamoyl phosphate site. Residues R169 and R222 each contribute to the L-aspartate site. Positions 264 and 265 each coordinate carbamoyl phosphate.

It belongs to the aspartate/ornithine carbamoyltransferase superfamily. ATCase family. As to quaternary structure, heterododecamer (2C3:3R2) of six catalytic PyrB chains organized as two trimers (C3), and six regulatory PyrI chains organized as three dimers (R2).

It catalyses the reaction carbamoyl phosphate + L-aspartate = N-carbamoyl-L-aspartate + phosphate + H(+). It participates in pyrimidine metabolism; UMP biosynthesis via de novo pathway; (S)-dihydroorotate from bicarbonate: step 2/3. In terms of biological role, catalyzes the condensation of carbamoyl phosphate and aspartate to form carbamoyl aspartate and inorganic phosphate, the committed step in the de novo pyrimidine nucleotide biosynthesis pathway. This Campylobacter fetus subsp. fetus (strain 82-40) protein is Aspartate carbamoyltransferase catalytic subunit.